Here is a 53-residue protein sequence, read N- to C-terminus: MFRWGIIFLVIALIAAALGFGGLAGTAAWAAKIVFVVGIILFLISLFTGRRGR.

2 consecutive transmembrane segments (helical) span residues 4–24 (WGII…GGLA) and 27–47 (AAWA…ISLF).

Belongs to the UPF0391 family.

Its subcellular location is the cell membrane. In Sodalis glossinidius (strain morsitans), this protein is UPF0391 membrane protein SG0393.